Reading from the N-terminus, the 351-residue chain is uncharacterized protein (351 aa).

Positions 23, 25, 151, 184, 212, and 270 each coordinate Zn(2+). N6-carboxylysine is present on Lys151.

The protein belongs to the metallo-dependent hydrolases superfamily. Phosphotriesterase family. Zn(2+) serves as cofactor.

This is an uncharacterized protein from Mycoplasma pneumoniae (strain ATCC 29342 / M129 / Subtype 1) (Mycoplasmoides pneumoniae).